The chain runs to 292 residues: Poly(U)-specific endoribonuclease-A (292 aa).

Residues 8–285 (LNHELSKLFN…IGTAYPVLLS (278 aa)) form the EndoU domain. Active-site residues include histidine 162, histidine 178, and lysine 224.

It belongs to the ENDOU family. In terms of assembly, monomer. The cofactor is Mn(2+).

Its subcellular location is the nucleus. It catalyses the reaction uridylyl-uridylyl-ribonucleotide-RNA = a 3'-end uridylyl-2',3'-cyclophospho-uridine-RNA + a 5'-end dephospho-ribonucleoside-RNA. Poly(U)-specific endoribonuclease involved in the processing of intron-encoded box C/D snoRNAs, such as U16 and U86. Releases products that have 2',3'-cyclic phosphate termini at the 3'-end. The polypeptide is Poly(U)-specific endoribonuclease-A (endou-a) (Xenopus laevis (African clawed frog)).